A 225-amino-acid polypeptide reads, in one-letter code: Heptaprenylglyceryl phosphate synthase (225 aa).

Sn-glycerol 1-phosphate is bound at residue K6. Mg(2+) contacts are provided by D8 and T34. Sn-glycerol 1-phosphate contacts are provided by residues 153–158 (YVEYSG), G183, and 203–204 (GN).

The protein belongs to the GGGP/HepGP synthase family. Group I subfamily. Homodimer. The cofactor is Mg(2+).

The enzyme catalyses sn-glycerol 1-phosphate + all-trans-heptaprenyl diphosphate = 3-heptaprenyl-sn-glycero-1-phosphate + diphosphate. Its pathway is membrane lipid metabolism; glycerophospholipid metabolism. Functionally, prenyltransferase that catalyzes in vivo the transfer of the heptaprenyl moiety of heptaprenyl pyrophosphate (HepPP; 35 carbon atoms) to the C3 hydroxyl of sn-glycerol-1-phosphate (G1P), producing heptaprenylglyceryl phosphate (HepGP). This reaction is an ether-bond-formation step in the biosynthesis of archaea-type G1P-based membrane lipids found in Bacillales. The protein is Heptaprenylglyceryl phosphate synthase of Listeria innocua serovar 6a (strain ATCC BAA-680 / CLIP 11262).